A 475-amino-acid chain; its full sequence is Ribulose bisphosphate carboxylase large chain (475 aa).

A propeptide spanning residues 1-2 (MS) is cleaved from the precursor. Proline 3 bears the N-acetylproline mark. Residue lysine 14 is modified to N6,N6,N6-trimethyllysine. Asparagine 123 and threonine 173 together coordinate substrate. Lysine 175 serves as the catalytic Proton acceptor. Lysine 177 lines the substrate pocket. Residues lysine 201, aspartate 203, and glutamate 204 each coordinate Mg(2+). N6-carboxylysine is present on lysine 201. Histidine 294 (proton acceptor) is an active-site residue. Substrate-binding residues include arginine 295, histidine 327, and serine 379.

This sequence belongs to the RuBisCO large chain family. Type I subfamily. As to quaternary structure, heterohexadecamer of 8 large chains and 8 small chains. The cofactor is Mg(2+).

The protein localises to the plastid. It localises to the chloroplast. It catalyses the reaction 2 (2R)-3-phosphoglycerate + 2 H(+) = D-ribulose 1,5-bisphosphate + CO2 + H2O. It carries out the reaction D-ribulose 1,5-bisphosphate + O2 = 2-phosphoglycolate + (2R)-3-phosphoglycerate + 2 H(+). In terms of biological role, ruBisCO catalyzes two reactions: the carboxylation of D-ribulose 1,5-bisphosphate, the primary event in carbon dioxide fixation, as well as the oxidative fragmentation of the pentose substrate in the photorespiration process. Both reactions occur simultaneously and in competition at the same active site. The sequence is that of Ribulose bisphosphate carboxylase large chain from Chlorella vulgaris (Green alga).